Here is a 147-residue protein sequence, read N- to C-terminus: MANSSARPAFLVMTALALLLLLCVGPGGISGNKLKLLLRKREAPAPTMTPVAVQESRAKEFLSSLRRPKRQLWDRSRPEVQQWYQHFLYLGFDEAKFEDDISYWLNRNRNGHDYYDYYQRHYDEDSAIGPRSAHSFRHGASVNYDDY.

The signal sequence occupies residues 1 to 31 (MANSSARPAFLVMTALALLLLLCVGPGGISG). Propeptides lie at residues 32–68 (NKLK…LRRP) and 132–147 (SAHS…YDDY).

The protein belongs to the augurin family.

It is found in the secreted. The protein localises to the cytoplasm. It localises to the apical cell membrane. Probable hormone that may attenuate cell proliferation and induce senescence of oligodendrocyte and neural precursor cells in the central nervous system. ECRG4-induced senescence is characterized by G1 arrest, RB1 dephosphorylation and accelerated CCND1 and CCND3 proteasomal degradation. The protein is Augurin of Bos taurus (Bovine).